Consider the following 2227-residue polypeptide: MNMSKQGIFQTVGSGLDHILSLADIEEEQMIQSVDRTAVTGASYFTSVDQSSVHTAEVGSHQIEPLKTSVDKPGSKKTQGEKFFLIHSADWLTTHALFHEVAKLDVVKLLYNEQFAVQGLLRYHTYARFGIEIQVQINPTPFQQGGLICAMVPGDQSYGSIASLTVYPHGLLNCNINNVVRIKVPFIYTRGAYHFKDPQYPVWELTIRVWSELNIGTGTSAYTSLNVLARFTDLELHGLTPLSTQMMRNEFRVSTTENVVNLSNYEDARAKMSFALDPEDWKSDPSQGGGIKITHFTTWTSIPTLAAQFPFNASDSVGQQIKVIPVDPYFFQMTNTNPDQKCITALASICQMFCFWRGDLVFDFQVFPTKYHSGRLLFCFVPGNELIDVTGITLKQATTAPCAVMDITGVQSTLRFRVPWISDTPYRVNRYTKSAHQKGEYTAIGKLIVYCYNRLTSPSNVASHVRVNVYLSAINLECFAPLYHAMDVTTQVGDDSGGFSTTVSTEQNVPDPQVGITTMRDLKGKANRGKMDVSGVQAPVGAITTIEDPVLAKKVPETFPELKPGESRHTSDHMSIYKFMGRSHFLCTFTFNSNNKEYTFPITLSSTSNPPHGLPSTLRWFFNLFQLYRGPLDLTIIITGATDVDGMAWFTPVGLAVDTPWVEKESALSIDYKTALGAVRFNTRRTGNIQIRLPWYSYLYAVSGALDGLGDKTDSTFGLVSIQIANYNHSDEYLSFSCYLSVTEQSEFYFPRAPLNSNAMLSTESMMSRIAAGDLESSVDDPRSEEDRRFESHIECRKPYKELRLEVGKQRLKYAQEELSNEVLPPPRKMKGLFSQAKISLFYTEEHEIMKFSWRGVTADTRALRRFGFSMAAGRSVWTLEMDAGVLTGRLVRLNDEKWTEMKDDKIVSLIEKFTSNKYWSKVSFPHGMLDLEEIAANSTDFPNMSETDLCFLLHWLNPKKINLADRMLGLSGVQEIKEQGVGLIAECRTFLDSIAGTLKSMMFGFHHSVTVEIINTVLCFVKSGILLYVIQQLNQDEHSHIIGLLRVMNYADIGCSVISCGKVFSKMLETVFNWQMDSRMMELRTQSFSNWLRDICSGITIFKSFKDAIYWLYTKLKDFYEVNYGKKKDILNILKDNQQKIEKAIEEADNFCILQIQDVEKFDQYQKGVDLIQKLRTVHSMAQVDPNLGVHLSPLRDCIARVHQKLKNLGSINQAMVTRCEPVVCYLYGKRGGGKSLTSIALATKICKHYGVEPEKNIYTKPVASDYWDGYSGQLVCIIDDIGQNTTDEDWSDFCQLVSGCPMRLNMASLEEKGRHFSSPFIIATSNWSNPSPKTVYVKEAIDRRLHFKVEVKPASFFKNPHNDMLNVNLAKTNDAIKDMSCVDLIMDGHNISLMDLLSSLVMTVEIRKQNMSEFMELWSQGISDDDNDSAVAEFFQSFPSGEPSNSKLSSFFQSVTNHKWVAVGAAVGILGVLVGGWFVYKHFSRKEEEPIPAEGVYHGVTKPKQVIKLDADPVESQSTLEIAGLVRKNLVQFGVGEKNGCVRWVMNALGVKDDWLLVPSHAYKFEKDYEMMEFYFNRGGTYYSISAGNVVIQSLDVGFQDVVLMKVPTIPKFRDITQHFIKKGDVPRALNRLATLVTTVNGTPMLISEGPLKMEEKATYVHKKNDGTTVDLTVDQAWRGKGEGLPGMCGGALVSSNQSIQNAILGIHVAGGNSILVAKLVTQEMFQNIDKKIESQRIMKVEFTQCSMNVVSKTLFRKSPIHHHIDKTMINFPAVMPFSKAEVDPMAVMLSKYSLPIVEEPEDYKEASIFYQNKIVGKTQLVDDFLDLDMAITGAPGIDAINMDSSPGFPYVQEKLTKRDLIWLDENGLLLGVHPRLAQRILFNTVMMENCSDLDVVFTTCPKDELRPLEKVLESKTRAIDACPLDYTILCRMYWGPAISYFHLNPGFHTGVAIGIDPDRQWDELFKTMIRFGDVGLDLDFSAFDASLSPFMIREAGRIMSELSGTPSHFGTALINTIIYSKHLLYNCCYHVCGSMPSGSPCTALLNSIINNINLYYVFSKIFGKSPVFFCQALRILCYGDDVLIVFSRDVQIDNLDLIGQKIVDEFKKLGMTATSADKNVPQLKPVSELTFLKRSFNLVEDRIRPAISEKTIWSLIAWQRSNAEFEQNLENAQWFAFMHGYEFYQKFYYFVQSCLEKEMIEYRLKSYDWWRMRFYDQCFICDLS.

2 consecutive short sequence motifs ((L)YPX(n)L motif) follow at residues 167 to 171 (YPHGL) and 200 to 205 (YPVWEL). The segment at 766-836 (MMSRIAAGDL…PRKMKGLFSQ (71 aa)) is involved in P1-2A pentamerization. Residues 1011 to 1031 (TVEIINTVLCFVKSGILLYVI) form a helical membrane-spanning segment. The tract at residues 1043 to 1070 (IGLLRVMNYADIGCSVISCGKVFSKMLE) is membrane-penetrating ability. Residues 1127 to 1152 (KKKDILNILKDNQQKIEKAIEEADNF) are a coiled coil. The region spanning 1204 to 1366 (HQKLKNLGSI…SFFKNPHNDM (163 aa)) is the SF3 helicase domain. 1230 to 1237 (GKRGGGKS) is a binding site for ATP. A helical transmembrane segment spans residues 1462–1482 (WVAVGAAVGILGVLVGGWFVY). O-(5'-phospho-RNA)-tyrosine is present on Y1499. In terms of domain architecture, Peptidase C3 spans 1514–1728 (DPVESQSTLE…VAKLVTQEMF (215 aa)). Active-site for protease 3C activity residues include H1563, D1603, and C1691. The 122-residue stretch at 1976 to 2097 (DVGLDLDFSA…VFSRDVQIDN (122 aa)) folds into the RdRp catalytic domain.

The protein belongs to the picornaviridae polyprotein family. Homodimer. Homomultimer; probably interacts with membranes in a multimeric form. Seems to assemble into amyloid-like fibers. In terms of assembly, homodimer. Monomer. Interacts with protein 3CD. As to quaternary structure, interacts with host ACBD3. Interacts with protein 3AB. In terms of assembly, interacts with human MAVS. As to quaternary structure, homodimer; disulfide-linked. Homopentamer. Homooligomer. In terms of assembly, interacts with capsid protein VP2. Interacts with capsid protein VP3. As to quaternary structure, interacts with capsid protein VP1. Interacts with capsid protein VP3. Interacts with capsid protein VP1. Interacts with capsid protein VP2. Specific enzymatic cleavages by viral protease in vivo yield a variety of precursors and mature proteins. Polyprotein processing intermediates are produced, such as P1-2A which is a functional precursor of the structural proteins, VP0 which is a VP4-VP2 precursor, VP1-2A precursor, 3ABC precursor which is a stable and catalytically active precursor of 3A, 3B and 3C proteins, 3AB and 3CD precursors. The assembly signal 2A is removed from VP1-2A by a host protease, possibly host Cathepsin L. This cleavage occurs over a region of 3 amino-acids probably generating VP1 proteins with heterogeneous C-termini. Post-translationally, during virion maturation, immature virions are rendered infectious following cleavage of VP0 into VP4 and VP2. This maturation seems to be an autocatalytic event triggered by the presence of RNA in the capsid and is followed by a conformational change of the particle. In terms of processing, the assembly signal 2A is removed from VP1-2A by a host protease, possibly host Cathepsin L in naked virions. This cleavage does not occur in enveloped virions. This cleavage occurs over a region of 3 amino-acids probably generating VP1 proteins with heterogeneous C-termini. VPg is uridylylated prior to priming replication into VPg-pUpU. Post-translationally, unlike other picornaviruses, does not seem to be myristoylated.

The protein resides in the virion. It localises to the host endosome. It is found in the host multivesicular body. The protein localises to the host membrane. Its subcellular location is the host mitochondrion outer membrane. The protein resides in the host cytoplasm. It localises to the host cytoplasmic vesicle membrane. It carries out the reaction RNA(n) + a ribonucleoside 5'-triphosphate = RNA(n+1) + diphosphate. The enzyme catalyses a ribonucleoside 5'-triphosphate + H2O = a ribonucleoside 5'-diphosphate + phosphate + H(+). The catalysed reaction is Selective cleavage of Gln-|-Gly bond in the poliovirus polyprotein. In other picornavirus reactions Glu may be substituted for Gln, and Ser or Thr for Gly.. Capsid proteins VP1, VP2, and VP3 form a closed capsid enclosing the viral positive strand RNA genome. All these proteins contain a beta-sheet structure called beta-barrel jelly roll. Together they form an icosahedral capsid (T=3) composed of 60 copies of each VP1, VP2, and VP3, with a diameter of approximately 300 Angstroms. VP1 is situated at the 12 fivefold axes, whereas VP2 and VP3 are located at the quasi-sixfold axes. The naked capsid interacts with the host receptor HAVCR1 to provide virion attachment to and probably entry into the target cell. In terms of biological role, VP0 precursor is a component of the immature procapsids. Its function is as follows. Plays a role in the assembly of the 12 pentamers into an icosahedral structure. Has not been detected in mature virions, supposedly owing to its small size. Functionally, precursor component of immature procapsids that corresponds to an extended form of the structural protein VP1. After maturation, possibly by the host Cathepsin L, the assembly signal 2A is cleaved to give rise to the mature VP1 protein. Functions as a viroporin. Affects membrane integrity and causes an increase in membrane permeability. Involved in host intracellular membrane rearrangements probably to give rise to the viral factories. Does not disrupt calcium homeostasis or glycoprotein trafficking. Antagonizes the innate immune response of the host by suppressing IFN-beta synthesis, which it achieves by interfering with the RIG-I/IFIH1 pathway. In terms of biological role, affects membrane integrity and causes an increase in membrane permeability. Its function is as follows. Associates with and induces structural rearrangements of intracellular membranes. Displays RNA-binding activity. Functionally, the precursor 3ABC is targeted to the mitochondrial membrane where protease 3C activity cleaves and inhibits the host antiviral protein MAVS, thereby disrupting activation of IRF3 through the IFIH1/MDA5 pathway. In vivo, the protease activity of 3ABC precursor is more efficient in cleaving the 2BC precursor than that of protein 3C. The 3ABC precursor may therefore play a role in the proteolytic processing of the polyprotein. Possible viroporin. Interacts with the 3CD precursor and with RNA structures found at both the 5'- and 3'-termini of the viral genome. Since the 3AB precursor contains the hydrophobic domain 3A, it probably anchors the whole viral replicase complex to intracellular membranes on which viral RNA synthesis occurs. In terms of biological role, may serve as membrane anchor to the 3AB and 3ABC precursors via its hydrophobic domain. May interact with RNA. Its function is as follows. Acts as a primer for viral RNA replication and remains covalently bound to viral genomic RNA. VPg is uridylylated prior to priming replication into VPg-pUpU. The VPg-pUpU is then used as primer on the genomic RNA poly(A) by the RNA-dependent RNA polymerase to replicate the viral genome. Functionally, cysteine protease that generates mature viral proteins from the precursor polyprotein. In addition to its proteolytic activity, it binds to viral RNA, and thus influences viral genome replication. RNA and substrate bind cooperatively to the protease. Cleaves IKBKG/NEMO to impair innate immune signaling. Cleaves host PABPC1 which may participate in the switch of viral translation to RNA synthesis. Interacts with the 3AB precursor and with RNA structures found at both the 5'- and 3'-termini of the viral genome. Disrupts TLR3 signaling by degrading the host adapter protein TICAM1/TRIF. In terms of biological role, RNA-directed RNA polymerase 3D-POL replicates genomic and antigenomic RNA by recognizing replications specific signals. This Human hepatitis A virus genotype IA (isolate H2) (HHAV) protein is Genome polyprotein.